The primary structure comprises 135 residues: Ribonuclease P protein component (135 aa).

The protein belongs to the RnpA family. Consists of a catalytic RNA component (M1 or rnpB) and a protein subunit.

It catalyses the reaction Endonucleolytic cleavage of RNA, removing 5'-extranucleotides from tRNA precursor.. In terms of biological role, RNaseP catalyzes the removal of the 5'-leader sequence from pre-tRNA to produce the mature 5'-terminus. It can also cleave other RNA substrates such as 4.5S RNA. The protein component plays an auxiliary but essential role in vivo by binding to the 5'-leader sequence and broadening the substrate specificity of the ribozyme. This Pseudomonas paraeruginosa (strain DSM 24068 / PA7) (Pseudomonas aeruginosa (strain PA7)) protein is Ribonuclease P protein component.